We begin with the raw amino-acid sequence, 87 residues long: Small ribosomal subunit protein uS17 (87 aa).

This sequence belongs to the universal ribosomal protein uS17 family. Part of the 30S ribosomal subunit.

In terms of biological role, one of the primary rRNA binding proteins, it binds specifically to the 5'-end of 16S ribosomal RNA. The protein is Small ribosomal subunit protein uS17 of Listeria innocua serovar 6a (strain ATCC BAA-680 / CLIP 11262).